The following is a 943-amino-acid chain: Isoleucine--tRNA ligase (943 aa).

The short motif at 58–68 is the 'HIGH' region element; it reads PYANGKIHIGH. Position 567 (Glu567) interacts with L-isoleucyl-5'-AMP. The 'KMSKS' region signature appears at 608 to 612; it reads KMSKS. Lys611 serves as a coordination point for ATP. Residues Cys906, Cys909, Cys926, and Cys929 each contribute to the Zn(2+) site.

Belongs to the class-I aminoacyl-tRNA synthetase family. IleS type 1 subfamily. Monomer. Zn(2+) serves as cofactor.

It is found in the cytoplasm. It carries out the reaction tRNA(Ile) + L-isoleucine + ATP = L-isoleucyl-tRNA(Ile) + AMP + diphosphate. Catalyzes the attachment of isoleucine to tRNA(Ile). As IleRS can inadvertently accommodate and process structurally similar amino acids such as valine, to avoid such errors it has two additional distinct tRNA(Ile)-dependent editing activities. One activity is designated as 'pretransfer' editing and involves the hydrolysis of activated Val-AMP. The other activity is designated 'posttransfer' editing and involves deacylation of mischarged Val-tRNA(Ile). This chain is Isoleucine--tRNA ligase, found in Pseudomonas putida (strain W619).